Reading from the N-terminus, the 217-residue chain is Tegument protein BKRF4 (217 aa).

A disordered region spans residues 1–217; it reads MAMFLKSRGV…GNNNYNWPWL (217 aa). Positions 32–42 are enriched in polar residues; it reads YTLGSQASQSI. Over residues 43-79 the composition is skewed to acidic residues; that stretch reads QEEDVSDTDESDYSDEDEEIDLEEEYPSDEDPSEGSD. The tract at residues 63 to 64 is interaction with host histones H3/H4; the sequence is DL. Residues 81–84 are interaction with host H2A/H2B; the sequence is DPSW. The span at 89–102 shows a compositional bias: acidic residues; it reads SDESDYSESDEDEA. Residues 106-132 show a composition bias toward low complexity; sequence SQASRSSRVSPSTQQSSGLTPTPSFSR. Over residues 136 to 145 the composition is skewed to pro residues; that stretch reads RAPPRPPAPA. The span at 208–217 shows a compositional bias: polar residues; the sequence is GNNNYNWPWL.

It belongs to the lymphocryptovirus BKRF4 family. As to quaternary structure, forms a complex with the host H3/H4 dimer and histone chaperone ASF1. Also forms a complex with host H2A/H2B dimer. Interacts (via C-terminus) with BGLF2; this interaction is important for infectious virion production.

It is found in the virion tegument. The protein resides in the host nucleus. The protein localises to the host cytoplasm. It localises to the host perinuclear region. Histone-binding protein that binds to histones H2A/H2B, H3/H4 and cellular chromatin to overcome the host DNA damage response triggered by the viral genome ends. Interferes with histone ubiquitination and recruitment of repair proteins. The chain is Tegument protein BKRF4 from Epstein-Barr virus (strain GD1) (HHV-4).